Reading from the N-terminus, the 270-residue chain is Undecaprenyl-diphosphatase 1 (270 aa).

The next 7 helical transmembrane spans lie at 5–25 (YYVL…PIPI), 42–62 (IEGF…VLLI), 89–109 (FFFI…GVLF), 117–137 (LKGV…LWII), 192–212 (FSFL…ITDI), 220–240 (TLFV…YISL), and 250–270 (GNLK…LIFL).

This sequence belongs to the UppP family.

Its subcellular location is the cell membrane. The enzyme catalyses di-trans,octa-cis-undecaprenyl diphosphate + H2O = di-trans,octa-cis-undecaprenyl phosphate + phosphate + H(+). Its function is as follows. Catalyzes the dephosphorylation of undecaprenyl diphosphate (UPP). Confers resistance to bacitracin. This Bacillus cereus (strain ATCC 14579 / DSM 31 / CCUG 7414 / JCM 2152 / NBRC 15305 / NCIMB 9373 / NCTC 2599 / NRRL B-3711) protein is Undecaprenyl-diphosphatase 1.